A 622-amino-acid chain; its full sequence is Polypeptide N-acetylgalactosaminyltransferase 6 (622 aa).

Topologically, residues 1–8 (MRLLRRRH) are cytoplasmic. Residues 9–28 (MSLRLAMLGSVFMLFLFIRQ) traverse the membrane as a helical; Signal-anchor for type II membrane protein segment. Topologically, residues 29 to 622 (KDVSNQEQAM…RDPYQLWLFV (594 aa)) are lumenal. Residue Asn86 is glycosylated (N-linked (GlcNAc...) asparagine). A catalytic subdomain A region spans residues 176-285 (LPTTSVIIVF…HGWLEPLLAR (110 aa)). Positions 269, 271, and 407 each coordinate Mn(2+). The catalytic subdomain B stretch occupies residues 348-410 (PIKSPTFAGG…PCSVVGHVFR (63 aa)). Residue Asn476 is glycosylated (N-linked (GlcNAc...) asparagine). Residues 506 to 622 (TNQCLDVGEN…RDPYQLWLFV (117 aa)) form the Ricin B-type lectin domain. Cys509 and Cys527 are joined by a disulfide. UDP-N-acetyl-alpha-D-galactosamine contacts are provided by Asp511, Glu514, His528, and Asn533. 2 disulfides stabilise this stretch: Cys553–Cys566 and Cys597–Cys610.

It belongs to the glycosyltransferase 2 family. GalNAc-T subfamily. Requires Mn(2+) as cofactor.

Its subcellular location is the golgi apparatus membrane. It carries out the reaction L-seryl-[protein] + UDP-N-acetyl-alpha-D-galactosamine = a 3-O-[N-acetyl-alpha-D-galactosaminyl]-L-seryl-[protein] + UDP + H(+). It catalyses the reaction L-threonyl-[protein] + UDP-N-acetyl-alpha-D-galactosamine = a 3-O-[N-acetyl-alpha-D-galactosaminyl]-L-threonyl-[protein] + UDP + H(+). Its pathway is protein modification; protein glycosylation. In terms of biological role, catalyzes the initial reaction in O-linked oligosaccharide biosynthesis, the transfer of an N-acetyl-D-galactosamine residue to a serine or threonine residue on the protein receptor. May participate in synthesis of oncofetal fibronectin. Has activity toward Muc1a, Muc2, EA2 and fibronectin peptides. This chain is Polypeptide N-acetylgalactosaminyltransferase 6 (Galnt6), found in Mus musculus (Mouse).